The sequence spans 295 residues: Ribosomal RNA small subunit methyltransferase H (295 aa).

S-adenosyl-L-methionine contacts are provided by residues 32 to 34, Asp-50, Phe-77, Asp-98, and Gln-105; that span reads GGY. A disordered region spans residues 275–295; it reads KEISENTRSRSAKLRGIVKEE.

Belongs to the methyltransferase superfamily. RsmH family.

The protein localises to the cytoplasm. The catalysed reaction is cytidine(1402) in 16S rRNA + S-adenosyl-L-methionine = N(4)-methylcytidine(1402) in 16S rRNA + S-adenosyl-L-homocysteine + H(+). In terms of biological role, specifically methylates the N4 position of cytidine in position 1402 (C1402) of 16S rRNA. The polypeptide is Ribosomal RNA small subunit methyltransferase H (Anaplasma phagocytophilum (strain HZ)).